The chain runs to 94 residues: MANAHDIIKRPVITERSVNQMAEKKYTFEVDVKASKTQIKDAVEAIFGVKVEKINTLISKPKAKRVGRHAGYTARRKKAVVTLTADSKELDYLG.

This sequence belongs to the universal ribosomal protein uL23 family. In terms of assembly, part of the 50S ribosomal subunit. Contacts protein L29, and trigger factor when it is bound to the ribosome.

Functionally, one of the early assembly proteins it binds 23S rRNA. One of the proteins that surrounds the polypeptide exit tunnel on the outside of the ribosome. Forms the main docking site for trigger factor binding to the ribosome. This is Large ribosomal subunit protein uL23 from Exiguobacterium sibiricum (strain DSM 17290 / CCUG 55495 / CIP 109462 / JCM 13490 / 255-15).